Consider the following 930-residue polypeptide: Isoleucine--tRNA ligase (930 aa).

The 'HIGH' region motif lies at 57–67 (PYANGNIHVGH). An L-isoleucyl-5'-AMP-binding site is contributed by E554. The short motif at 595–599 (KMSKS) is the 'KMSKS' region element. Residue K598 participates in ATP binding. 4 residues coordinate Zn(2+): C888, C891, C908, and C911.

It belongs to the class-I aminoacyl-tRNA synthetase family. IleS type 1 subfamily. As to quaternary structure, monomer. Requires Zn(2+) as cofactor.

The protein resides in the cytoplasm. It carries out the reaction tRNA(Ile) + L-isoleucine + ATP = L-isoleucyl-tRNA(Ile) + AMP + diphosphate. Its function is as follows. Catalyzes the attachment of isoleucine to tRNA(Ile). As IleRS can inadvertently accommodate and process structurally similar amino acids such as valine, to avoid such errors it has two additional distinct tRNA(Ile)-dependent editing activities. One activity is designated as 'pretransfer' editing and involves the hydrolysis of activated Val-AMP. The other activity is designated 'posttransfer' editing and involves deacylation of mischarged Val-tRNA(Ile). In Streptococcus pneumoniae serotype 19F (strain G54), this protein is Isoleucine--tRNA ligase.